We begin with the raw amino-acid sequence, 293 residues long: HTH-type transcriptional regulator HdfR (293 aa).

The HTH lysR-type domain maps to 1-58; the sequence is MDTELLKTFLEVSRTRHFGRAAESLYLTQSAVSFRIRQLENQLGANLFTRHRNNIRLT. The H-T-H motif DNA-binding region spans 18–37; that stretch reads FGRAAESLYLTQSAVSFRIR.

The protein belongs to the LysR transcriptional regulatory family.

Its function is as follows. Negatively regulates the transcription of the flagellar master operon flhDC by binding to the upstream region of the operon. The sequence is that of HTH-type transcriptional regulator HdfR from Yersinia pseudotuberculosis serotype O:1b (strain IP 31758).